The following is a 42-amino-acid chain: Photosystem I reaction center subunit IX (42 aa).

The helical transmembrane segment at 7–27 (YLSAAPVLSTLWLGALAALLI) threads the bilayer.

This sequence belongs to the PsaJ family.

The protein localises to the plastid membrane. May help in the organization of the PsaE and PsaF subunits. This chain is Photosystem I reaction center subunit IX, found in Cuscuta reflexa (Southern Asian dodder).